We begin with the raw amino-acid sequence, 574 residues long: Kelch-like protein 18 (574 aa).

A BTB domain is found at 66–105; that stretch reads MFTNDMMECKQDEIVMQGMDPSALEALINFAYNGNLAIDQ. The 103-residue stretch at 140-242 folds into the BACK domain; it reads CLGVRQFAET…RPQFLSDRVQ (103 aa). Kelch repeat units lie at residues 289 to 336, 337 to 383, 384 to 430, 432 to 477, 479 to 524, and 525 to 571; these read LIYA…VVNG, LLYA…VLDG, QIYV…VFEG, IYVS…SLGS, MFVC…ASCG, and RLYA…CIPL.

Interacts with AURKA. Interacts (via BTB domain) with CUL3. Interacts (via kelch repeats) with UNC119.

Its pathway is protein modification; protein ubiquitination. Its function is as follows. Substrate-specific adapter of a BCR (BTB-CUL3-RBX1) E3 ubiquitin-protein ligase complex required for mitotic progression and cytokinesis. The BCR(KLHL18) E3 ubiquitin ligase complex mediates the ubiquitination of AURKA leading to its activation at the centrosome which is required for initiating mitotic entry. Regulates light-and dark-dependent alpha-transducin localization changes in rod photoreceptors through UNC119 ubiquitination and degradation. Preferentially ubiquitinates the unphosphorylated form of UNC119 over the phosphorylated form. In the presence of UNC119, under dark-adapted conditions alpha-transducin mislocalizes from the outer segment to the inner part of rod photoreceptors which leads to decreased photoreceptor damage caused by light. In Homo sapiens (Human), this protein is Kelch-like protein 18 (KLHL18).